Consider the following 38-residue polypeptide: Large ribosomal subunit protein bL36 (38 aa).

It belongs to the bacterial ribosomal protein bL36 family.

In Amoebophilus asiaticus (strain 5a2), this protein is Large ribosomal subunit protein bL36.